Here is a 199-residue protein sequence, read N- to C-terminus: FMN-dependent NADH:quinone oxidoreductase 4 (199 aa).

FMN-binding positions include S10, 95–98 (MYNL), and 139–142 (SRGG).

Belongs to the azoreductase type 1 family. As to quaternary structure, homodimer. FMN is required as a cofactor.

It carries out the reaction 2 a quinone + NADH + H(+) = 2 a 1,4-benzosemiquinone + NAD(+). It catalyses the reaction N,N-dimethyl-1,4-phenylenediamine + anthranilate + 2 NAD(+) = 2-(4-dimethylaminophenyl)diazenylbenzoate + 2 NADH + 2 H(+). In terms of biological role, quinone reductase that provides resistance to thiol-specific stress caused by electrophilic quinones. Functionally, also exhibits azoreductase activity. Catalyzes the reductive cleavage of the azo bond in aromatic azo compounds to the corresponding amines. In Burkholderia lata (strain ATCC 17760 / DSM 23089 / LMG 22485 / NCIMB 9086 / R18194 / 383), this protein is FMN-dependent NADH:quinone oxidoreductase 4.